The primary structure comprises 220 residues: 26S proteasome non-ATPase regulatory subunit 9 (220 aa).

Coiled-coil stretches lie at residues 4–32 (GTTT…GQIL) and 61–91 (RLAR…YHSE). Residues 102-200 (RASALDLDSD…QLDLILVPKT (99 aa)) form the PDZ domain.

Belongs to the proteasome subunit p27 family. Interacts with PI31; this interaction is increased by PI31 ADP-ribosylation. Interacts with Rpt5.

In terms of biological role, acts as a chaperone during the assembly of the 26S proteasome, specifically of the base subcomplex of the PA700/19S regulatory complex (RC). This is 26S proteasome non-ATPase regulatory subunit 9 from Drosophila melanogaster (Fruit fly).